We begin with the raw amino-acid sequence, 158 residues long: Ribosome maturation factor RimP (158 aa).

Belongs to the RimP family.

It is found in the cytoplasm. Its function is as follows. Required for maturation of 30S ribosomal subunits. The sequence is that of Ribosome maturation factor RimP from Leuconostoc mesenteroides subsp. mesenteroides (strain ATCC 8293 / DSM 20343 / BCRC 11652 / CCM 1803 / JCM 6124 / NCDO 523 / NBRC 100496 / NCIMB 8023 / NCTC 12954 / NRRL B-1118 / 37Y).